A 114-amino-acid polypeptide reads, in one-letter code: Thioredoxin H1 (114 aa).

Ala-2 bears the N-acetylalanine mark. Positions 2-114 (ASEEGQVIAC…LQSTIAKHLA (113 aa)) constitute a Thioredoxin domain. Active-site nucleophile residues include Cys-40 and Cys-43. Cysteines 40 and 43 form a disulfide.

It belongs to the thioredoxin family. Plant H-type subfamily. Interacts with FBA6. Interacts with MDH1.

It is found in the cytoplasm. In terms of biological role, thiol-disulfide oxidoreductase involved in the redox regulation of a number of cytosolic enzymes. Activates the cytosolic malate dehydrogenase (MDH) probably by reducing an interchain disulfide bond of the inactive MDH homodimer. Possesses insulin disulfide bonds reducing activity. The chain is Thioredoxin H1 (TRX1) from Arabidopsis thaliana (Mouse-ear cress).